Reading from the N-terminus, the 95-residue chain is Small ribosomal subunit protein bS6 (95 aa).

This sequence belongs to the bacterial ribosomal protein bS6 family.

Functionally, binds together with bS18 to 16S ribosomal RNA. The polypeptide is Small ribosomal subunit protein bS6 (Geobacillus kaustophilus (strain HTA426)).